Reading from the N-terminus, the 200-residue chain is Lipopolysaccharide core heptose(II)-phosphate phosphatase (200 aa).

The N-terminal stretch at 1-25 (MLAFCRSSLKSKKYIIILLALAAIA) is a signal peptide.

Belongs to the phosphoglycerate mutase family. Ais subfamily.

The protein localises to the periplasm. Its pathway is bacterial outer membrane biogenesis; lipopolysaccharide metabolism. In terms of biological role, catalyzes the dephosphorylation of heptose(II) of the outer membrane lipopolysaccharide core. In Escherichia coli (strain ATCC 8739 / DSM 1576 / NBRC 3972 / NCIMB 8545 / WDCM 00012 / Crooks), this protein is Lipopolysaccharide core heptose(II)-phosphate phosphatase.